A 492-amino-acid chain; its full sequence is Catalase isozyme 2 (492 aa).

Residues His65 and Asn138 contribute to the active site. Tyr348 contributes to the heme binding site.

The protein belongs to the catalase family. Homotetramer. It depends on heme as a cofactor.

It is found in the peroxisome. The catalysed reaction is 2 H2O2 = O2 + 2 H2O. Its function is as follows. Occurs in almost all aerobically respiring organisms and serves to protect cells from the toxic effects of hydrogen peroxide. The protein is Catalase isozyme 2 (CAT2) of Nicotiana plumbaginifolia (Leadwort-leaved tobacco).